The following is a 277-amino-acid chain: Large ribosomal subunit protein uL2 (277 aa).

The interval 199–277 (DHMNTSIGKA…ILLSRHKRKK (79 aa)) is disordered. Residues 209 to 220 (GRNRWLGRKPHN) show a composition bias toward basic residues.

This sequence belongs to the universal ribosomal protein uL2 family. As to quaternary structure, part of the 50S ribosomal subunit. Forms a bridge to the 30S subunit in the 70S ribosome.

Its function is as follows. One of the primary rRNA binding proteins. Required for association of the 30S and 50S subunits to form the 70S ribosome, for tRNA binding and peptide bond formation. It has been suggested to have peptidyltransferase activity; this is somewhat controversial. Makes several contacts with the 16S rRNA in the 70S ribosome. The polypeptide is Large ribosomal subunit protein uL2 (Bradyrhizobium diazoefficiens (strain JCM 10833 / BCRC 13528 / IAM 13628 / NBRC 14792 / USDA 110)).